Consider the following 560-residue polypeptide: SET domain-containing protein 4 (560 aa).

Disordered regions lie at residues 1 to 61 (MTSP…PSPQ) and 125 to 157 (KKQN…AEDN). Low complexity predominate over residues 26–38 (SRSSSYSSNSSMS). Positions 47 to 59 (LSVSSAASETLPS) are enriched in polar residues. Residues 141–157 (ESSKENKITPSMRAEDN) show a composition bias toward basic and acidic residues. The segment at 160 to 210 (KNGCICGSSDSKDELFIQCNKCKTWQHKLCYAFKKSDPIKRDFVCKRCDSD) adopts a PHD-type zinc-finger fold. Residues 346–475 (ADIEVRKSSN…KGEEISVEWQ (130 aa)) enclose the SET domain.

It belongs to the SET3 family.

In terms of biological role, putative chromatin regulator. The sequence is that of SET domain-containing protein 4 (SET4) from Saccharomyces cerevisiae (strain ATCC 204508 / S288c) (Baker's yeast).